The following is a 735-amino-acid chain: Peroxisomal multifunctional enzyme type 2 (735 aa).

Residues 1–305 are (3R)-hydroxyacyl-CoA dehydrogenase; the sequence is MASPLRFDGR…IEVLHKIDSE (305 aa). Residues 16–40, leucine 21, and aspartate 40 each bind NAD(+); that span reads GAGGGLGRAYALAFAERGALVVVND. Lysine 46 carries the post-translational modification N6-acetyllysine; alternate. Lysine 46 is subject to N6-succinyllysine; alternate. At serine 52 the chain carries Phosphoserine. 2 positions are modified to N6-succinyllysine: lysine 57 and lysine 68. 75–76 serves as a coordination point for NAD(+); sequence SV. Lysine 84 bears the N6-succinyllysine mark. Asparagine 99 provides a ligand contact to NAD(+). Serine 151 provides a ligand contact to substrate. Tyrosine 164 acts as the Proton acceptor in catalysis. Residues 164–168 and 196–199 each bind NAD(+); these read YSAAK and AGSR. A Phosphothreonine modification is found at threonine 265. At lysine 275 the chain carries N6-succinyllysine. Serine 304 and serine 308 each carry phosphoserine. Positions 321 to 621 are enoyl-CoA hydratase 2; the sequence is SGFAGVVGHK…AQTPSEGGAL (301 aa). Lysine 355 carries the N6-succinyllysine modification. 405-406 is a binding site for (3R)-3-hydroxydecanoyl-CoA; sequence HG. Lysine 423 is modified (N6-succinyllysine). Residues lysine 434, 509 to 514, glycine 532, and phenylalanine 562 each bind (3R)-3-hydroxydecanoyl-CoA; that span reads DSNPLH. Residues 483 to 599 form the MaoC-like domain; sequence VPSRPPDAVL…QETGDIVISN (117 aa). Lysine 564 is modified (N6-acetyllysine). An N6-succinyllysine mark is found at lysine 578 and lysine 662. Residues 623–735 form the SCP2 domain; sequence SALVFGEIGR…QMILKDYAKL (113 aa). Lysine 668 carries the N6-acetyllysine modification. Substrate-binding residues include glutamine 705 and glutamine 723. Lysine 724 is subject to N6-succinyllysine. The Microbody targeting signal signature appears at 733–735; it reads AKL.

Belongs to the short-chain dehydrogenases/reductases (SDR) family. In terms of assembly, homodimer.

The protein resides in the peroxisome. It carries out the reaction a (3R)-3-hydroxyacyl-CoA + NAD(+) = a 3-oxoacyl-CoA + NADH + H(+). The enzyme catalyses (24R,25R)-3alpha,7alpha,12alpha,24-tetrahydroxy-5beta-cholestan-26-oyl-CoA = (24E)-3alpha,7alpha,12alpha-trihydroxy-5beta-cholest-24-en-26-oyl-CoA + H2O. The catalysed reaction is a (3R)-3-hydroxyacyl-CoA = a (2E)-enoyl-CoA + H2O. It catalyses the reaction (2E)-octenoyl-CoA + H2O = (3R)-hydroxyoctanoyl-CoA. It carries out the reaction (3R)-hydroxyoctanoyl-CoA + NAD(+) = 3-oxooctanoyl-CoA + NADH + H(+). The enzyme catalyses (3R)-hydroxyhexadecanoyl-CoA + NAD(+) = 3-oxohexadecanoyl-CoA + NADH + H(+). The catalysed reaction is (2E)-hexadecenedioyl-CoA + H2O = (3R)-hydroxyhexadecanedioyl-CoA. It catalyses the reaction (3R)-hydroxyhexadecanedioyl-CoA + NAD(+) = 3-oxohexadecanedioyl-CoA + NADH + H(+). It carries out the reaction (3R)-hydroxyhexadecanoyl-CoA = (2E)-hexadecenoyl-CoA + H2O. The enzyme catalyses (3R)-3-hydroxydecanoyl-CoA = (2E)-decenoyl-CoA + H2O. The catalysed reaction is (3R)-3-hydroxydecanoyl-CoA + NAD(+) = 3-oxodecanoyl-CoA + NADH + H(+). It catalyses the reaction (24R,25R)-3alpha,7alpha,12alpha,24-tetrahydroxy-5beta-cholestan-26-oyl-CoA + NAD(+) = 3alpha,7alpha,12alpha-trihydroxy-24-oxo-5beta-cholestan-26-oyl-CoA + NADH + H(+). It participates in lipid metabolism; fatty acid beta-oxidation. Bifunctional enzyme acting on the peroxisomal fatty acid beta-oxidation pathway. Catalyzes two of the four reactions in fatty acid degradation: hydration of 2-enoyl-CoA (trans-2-enoyl-CoA) to produce (3R)-3-hydroxyacyl-CoA, and dehydrogenation of (3R)-3-hydroxyacyl-CoA to produce 3-ketoacyl-CoA (3-oxoacyl-CoA), which is further metabolized by SCPx. Can use straight-chain and branched-chain fatty acids, as well as bile acid intermediates as substrates. This chain is Peroxisomal multifunctional enzyme type 2, found in Rattus norvegicus (Rat).